The sequence spans 393 residues: Digeranylgeranylglycerophospholipid reductase (393 aa).

9 residues coordinate FAD: alanine 13, aspartate 32, cysteine 43, alanine 44, glycine 46, arginine 95, valine 119, aspartate 274, and glycine 286. 2 residues coordinate a 2,3-bis-O-(geranylgeranyl)-sn-glycerol 1-phospholipid: arginine 327 and glycine 363.

The protein belongs to the geranylgeranyl reductase family. DGGGPL reductase subfamily. FAD is required as a cofactor.

It carries out the reaction a 2,3-bis-O-phytanyl-sn-glycerol 1-phospholipid + 8 A = a 2,3-bis-O-(geranylgeranyl)-sn-glycerol 1-phospholipid + 8 AH2. The catalysed reaction is 2,3-bis-O-(phytanyl)-sn-glycerol 1-phosphate + 8 A = 2,3-bis-O-(geranylgeranyl)-sn-glycerol 1-phosphate + 8 AH2. The enzyme catalyses CDP-2,3-bis-O-(geranylgeranyl)-sn-glycerol + 8 AH2 = CDP-2,3-bis-O-(phytanyl)-sn-glycerol + 8 A. It catalyses the reaction archaetidylserine + 8 AH2 = 2,3-bis-O-phytanyl-sn-glycero-3-phospho-L-serine + 8 A. It functions in the pathway membrane lipid metabolism; glycerophospholipid metabolism. In terms of biological role, is involved in the reduction of 2,3-digeranylgeranylglycerophospholipids (unsaturated archaeols) into 2,3-diphytanylglycerophospholipids (saturated archaeols) in the biosynthesis of archaeal membrane lipids. Catalyzes the formation of archaetidic acid (2,3-di-O-phytanyl-sn-glyceryl phosphate) from 2,3-di-O-geranylgeranylglyceryl phosphate (DGGGP) via the hydrogenation of each double bond of the isoprenoid chains. Is also probably able to reduce double bonds of geranyl groups in CDP-2,3-bis-O-(geranylgeranyl)-sn-glycerol and archaetidylserine, thus acting at various stages in the biosynthesis of archaeal membrane lipids. This chain is Digeranylgeranylglycerophospholipid reductase, found in Pyrococcus horikoshii (strain ATCC 700860 / DSM 12428 / JCM 9974 / NBRC 100139 / OT-3).